A 351-amino-acid polypeptide reads, in one-letter code: uncharacterized protein (351 aa).

The tract at residues 25-67 (KKAETETLPPANSQPAAPAPEAKPTEAPVAKAEAKPETPAQPV) is disordered. Positions 33-55 (PPANSQPAAPAPEAKPTEAPVAK) are enriched in low complexity.

This is an uncharacterized protein from Escherichia coli (strain K12).